Reading from the N-terminus, the 618-residue chain is MHLSKIIFLLIILFPYHVNSRKPIKYKNVNNVFIEIYPCKAIKWERKKKKRDLIKNNKLIHNVDVNYINMITNDNHISSEKCRDIKKKRKITSSEYGMSLEFFKKNPKKVVQNLKKRGMEKYLNVIVMLKKLINEKNENEVLRNKLRNRRKLLSDHIKNLIFNSKKYEDIINRDITNDSDHKTNLIHVDEEKKKTEKKNDTQDILKDNQKIRYINKENQATNNNINNQDNSNDVLKKNKIQIEEIKKETNQINKDIDHIEMNIINLKKKIEFNLYKLPNILLNKVPKGKTTEDNKIIKFYKKENIIQLNNEEYDFIEPHEEIIKKYENNFIFSNISNKIGFGYNILVNDIAKLERALIDFMINTHVNKFLYTYVKAPEIVTKSALFNTGQLPKFEEDLFKITDNYKLLNEDAYLIPTSEVSLLNLFKNSQIDYIHLPIKLVSHSSCFRTEKNNTYGKTSKGLLREHIFQKVELINITDKKTSPFYYKKLIKQSTYILKQLNIPYRLVLLNSIETPYSASICYDIEAWLPSQQRYVEVSSCSNCLDFQARRLNLKYKIKDSNNFCHTINGSGLAVGRVLAIILEQYQIKKKHKNEITKIQVPKVLRKYMNKDIIQVEYN.

417 to 419 contributes to the L-serine binding site; sequence TSE. 448–450 provides a ligand contact to ATP; it reads RTE. Glu-472 is a binding site for L-serine. An ATP-binding site is contributed by 536 to 539; that stretch reads EVSS. Position 570 (Ser-570) interacts with L-serine.

Belongs to the class-II aminoacyl-tRNA synthetase family. Type-1 seryl-tRNA synthetase subfamily. In terms of assembly, homodimer. The tRNA molecule binds across the dimer.

Its subcellular location is the cytoplasm. It catalyses the reaction tRNA(Ser) + L-serine + ATP = L-seryl-tRNA(Ser) + AMP + diphosphate + H(+). The catalysed reaction is tRNA(Sec) + L-serine + ATP = L-seryl-tRNA(Sec) + AMP + diphosphate + H(+). The protein operates within aminoacyl-tRNA biosynthesis; selenocysteinyl-tRNA(Sec) biosynthesis; L-seryl-tRNA(Sec) from L-serine and tRNA(Sec): step 1/1. Its function is as follows. Catalyzes the attachment of serine to tRNA(Ser). Is also able to aminoacylate tRNA(Sec) with serine, to form the misacylated tRNA L-seryl-tRNA(Sec), which will be further converted into selenocysteinyl-tRNA(Sec). This chain is Serine--tRNA ligase, cytoplasmic, found in Plasmodium falciparum (isolate 3D7).